We begin with the raw amino-acid sequence, 74 residues long: ATP synthase subunit c (74 aa).

2 consecutive transmembrane segments (helical) span residues 8-28 and 52-72; these read FIGI…VSNI and IGAG…MLLI.

The protein belongs to the ATPase C chain family. In terms of assembly, F-type ATPases have 2 components, F(1) - the catalytic core - and F(0) - the membrane proton channel. F(1) has five subunits: alpha(3), beta(3), gamma(1), delta(1), epsilon(1). F(0) has three main subunits: a(1), b(2) and c(10-14). The alpha and beta chains form an alternating ring which encloses part of the gamma chain. F(1) is attached to F(0) by a central stalk formed by the gamma and epsilon chains, while a peripheral stalk is formed by the delta and b chains.

The protein localises to the cell inner membrane. Its function is as follows. F(1)F(0) ATP synthase produces ATP from ADP in the presence of a proton or sodium gradient. F-type ATPases consist of two structural domains, F(1) containing the extramembraneous catalytic core and F(0) containing the membrane proton channel, linked together by a central stalk and a peripheral stalk. During catalysis, ATP synthesis in the catalytic domain of F(1) is coupled via a rotary mechanism of the central stalk subunits to proton translocation. Key component of the F(0) channel; it plays a direct role in translocation across the membrane. A homomeric c-ring of between 10-14 subunits forms the central stalk rotor element with the F(1) delta and epsilon subunits. The protein is ATP synthase subunit c of Rickettsia typhi (strain ATCC VR-144 / Wilmington).